Reading from the N-terminus, the 74-residue chain is Cytochrome c oxidase subunit 6C (74 aa).

The Mitochondrial matrix portion of the chain corresponds to 2 to 12; the sequence is STALAKPQMRG. Residues 13–53 form a helical membrane-spanning segment; sequence LLARRLRFHIVGAFMVSLGFATFYKFAVAEKRKKAYADFYR. Residues 54 to 74 are Mitochondrial intermembrane-facing; the sequence is NYDSMKDFEEMRKAGIFQSAK.

Belongs to the cytochrome c oxidase subunit 6c family. Component of the cytochrome c oxidase (complex IV, CIV), a multisubunit enzyme composed of 14 subunits. The complex is composed of a catalytic core of 3 subunits MT-CO1, MT-CO2 and MT-CO3, encoded in the mitochondrial DNA, and 11 supernumerary subunits COX4I1 (or COX4I2), COX5A, COX5B, COX6A2 (or COX6A1), COX6B1 (or COX6B2), COX6C, COX7A1 (or COX7A2), COX7B, COX7C, COX8B and NDUFA4, which are encoded in the nuclear genome. The complex exists as a monomer or a dimer and forms supercomplexes (SCs) in the inner mitochondrial membrane with NADH-ubiquinone oxidoreductase (complex I, CI) and ubiquinol-cytochrome c oxidoreductase (cytochrome b-c1 complex, complex III, CIII), resulting in different assemblies (supercomplex SCI(1)III(2)IV(1) and megacomplex MCI(2)III(2)IV(2)).

Its subcellular location is the mitochondrion inner membrane. The protein operates within energy metabolism; oxidative phosphorylation. Functionally, component of the cytochrome c oxidase, the last enzyme in the mitochondrial electron transport chain which drives oxidative phosphorylation. The respiratory chain contains 3 multisubunit complexes succinate dehydrogenase (complex II, CII), ubiquinol-cytochrome c oxidoreductase (cytochrome b-c1 complex, complex III, CIII) and cytochrome c oxidase (complex IV, CIV), that cooperate to transfer electrons derived from NADH and succinate to molecular oxygen, creating an electrochemical gradient over the inner membrane that drives transmembrane transport and the ATP synthase. Cytochrome c oxidase is the component of the respiratory chain that catalyzes the reduction of oxygen to water. Electrons originating from reduced cytochrome c in the intermembrane space (IMS) are transferred via the dinuclear copper A center (CU(A)) of subunit 2 and heme A of subunit 1 to the active site in subunit 1, a binuclear center (BNC) formed by heme A3 and copper B (CU(B)). The BNC reduces molecular oxygen to 2 water molecules using 4 electrons from cytochrome c in the IMS and 4 protons from the mitochondrial matrix. This chain is Cytochrome c oxidase subunit 6C (COX6C), found in Bos taurus (Bovine).